Consider the following 263-residue polypeptide: Rano class II histocompatibility antigen, B-1 beta chain (263 aa).

An N-terminal signal peptide occupies residues 1 to 27 (MALQTPSFLLPAAVVVLMVLSSPGTEG). The tract at residues 28–120 (RDSPRDFVYQ…SEVRTSLRRL (93 aa)) is beta-1. The Extracellular portion of the chain corresponds to 28-224 (RDSPRDFVYQ…RAQSESAQSK (197 aa)). Cystine bridges form between C42/C104 and C143/C199. The N-linked (GlcNAc...) asparagine glycan is linked to N46. Residues 121-214 (EQPNVAISLS…SLESPVTVEW (94 aa)) form a beta-2 region. The region spanning 123–211 (PNVAISLSRT…DHPSLESPVT (89 aa)) is the Ig-like C1-type domain. A connecting peptide region spans residues 215 to 224 (RAQSESAQSK). Residues 225–245 (MLSGIGGFVLGVIFLGLGLFI) traverse the membrane as a helical segment. Topologically, residues 246 to 263 (RHKRQKGPRGPPPAGLLQ) are cytoplasmic. A Glycyl lysine isopeptide (Lys-Gly) (interchain with G-Cter in ubiquitin) cross-link involves residue K251.

This sequence belongs to the MHC class II family.

It is found in the membrane. In terms of biological role, involved in the presentation of foreign antigens to the immune system. This is Rano class II histocompatibility antigen, B-1 beta chain (RT1-Bb) from Rattus norvegicus (Rat).